The sequence spans 102 residues: Small ribosomal subunit protein uS14m (102 aa).

It belongs to the universal ribosomal protein uS14 family.

Its subcellular location is the mitochondrion. This Paramecium tetraurelia protein is Small ribosomal subunit protein uS14m (RPS14).